The primary structure comprises 614 residues: Signal recognition particle receptor subunit alpha homolog (614 aa).

The tract at residues glutamate 119–valine 244 is disordered. The span at glutamine 149 to asparagine 160 shows a compositional bias: basic and acidic residues. The segment covering alanine 164 to glycine 178 has biased composition (pro residues). Basic and acidic residues predominate over residues alanine 232–proline 241. Residues serine 237 and serine 240 each carry the phosphoserine modification. Tyrosine 246 is modified (phosphotyrosine). Residues serine 268, serine 278, and serine 279 each carry the phosphoserine modification. Acidic residues predominate over residues serine 268 to glutamate 285. The disordered stretch occupies residues serine 268–lysine 290. The NG domain stretch occupies residues tyrosine 396 to methionine 613. GTP contacts are provided by residues glycine 402 to serine 409, aspartate 497 to arginine 501, and threonine 565 to aspartate 568.

This sequence belongs to the GTP-binding SRP family. Heterodimer of SrpRalpha and SrpRbeta. In 8-9 hours embryos, expression is seen in a segmental pattern along embryonic ventral midline.

It is found in the endoplasmic reticulum membrane. In terms of biological role, component of the SRP (signal recognition particle) receptor. Ensures, in conjunction with the signal recognition particle, the correct targeting of the nascent secretory proteins to the endoplasmic reticulum membrane system. Forms a guanosine 5'-triphosphate (GTP)-dependent complex with the SRP subunit Srp54. SRP receptor compaction and GTPase rearrangement drive SRP-mediated cotranslational protein translocation into the ER. May have a role in axonogenesis. The sequence is that of Signal recognition particle receptor subunit alpha homolog from Drosophila melanogaster (Fruit fly).